Consider the following 272-residue polypeptide: MAVVTMRELLDAGVHFGHQTRRWNPKMRRFIFTERNGIYIIDLQQTLTYIDQAFEFVKETVAHGGTVLFVGTKKQAQEAVQVEADRVGMPYVNHRWLGGMLTNFQTVSKRLNRMKELQAMDAAENGYEGRTKREVLMLTRERTKLERVLGGIAEMTRVPSALWIIDTNKEHIAVAEAHKLNIPVVAILDTNCDPDVVDFPVPGNDDAIRSTALLSRVISTAVEEGKKAREERQLAAAKDAAGDAKPEAEEAPAAAEAEEAPAAEAEEAPAAE.

Over residues 224–233 the composition is skewed to basic and acidic residues; it reads EGKKAREERQ. Positions 224 to 272 are disordered; sequence EGKKAREERQLAAAKDAAGDAKPEAEEAPAAAEAEEAPAAEAEEAPAAE. Residues 256–272 show a composition bias toward acidic residues; the sequence is EAEEAPAAEAEEAPAAE.

Belongs to the universal ribosomal protein uS2 family.

The sequence is that of Small ribosomal subunit protein uS2 from Corynebacterium glutamicum (strain ATCC 13032 / DSM 20300 / JCM 1318 / BCRC 11384 / CCUG 27702 / LMG 3730 / NBRC 12168 / NCIMB 10025 / NRRL B-2784 / 534).